A 240-amino-acid chain; its full sequence is Probable metal transport system ATP-binding protein TM_0124 (240 aa).

The ABC transporter domain occupies 4–223 (VEVKNLTYRI…LKKIFTDFDI (220 aa)). An ATP-binding site is contributed by 36 to 43 (GPNGAGKT).

It belongs to the ABC transporter superfamily.

In terms of biological role, part of an ATP-driven transport system TM_0123/TM_0124/TM_0125 for a metal. Probably responsible for energy coupling to the transport system. The protein is Probable metal transport system ATP-binding protein TM_0124 of Thermotoga maritima (strain ATCC 43589 / DSM 3109 / JCM 10099 / NBRC 100826 / MSB8).